The sequence spans 280 residues: MTVEYTASDLATYQNEVNEQIAKNKAHLESLTHPGSKVTFPIDQDISATPQNPNLKVFFFDIDNCLYKSSTRIHDLMQQSILRFFQTHLKLSPEDAHVLNNSYYKEYGLAIRGLVMFHKVNALEYNRLVDDSLPLQDILKPDIPLRNMLLRLRQSGKIDKLWLFTNAYKNHAIRCLRLLGIADLFDGLTYCDYSRTDTLVCKPHVKAFEKAMKESGLARYENAYFIDDSGKNIETGIKLGMKTCIHLVENEVNEILGQTPEGAIVISDILELPHVVSDLF.

Belongs to the SSM1 family.

Its function is as follows. Could be an enzyme that inactivates 6-azauracil by modifying it. This Saccharomyces cerevisiae (strain ATCC 204508 / S288c) (Baker's yeast) protein is Suppressor of disruption of TFIIS (SDT1).